The chain runs to 617 residues: Chaperone protein DnaK (617 aa).

T175 bears the Phosphothreonine; by autocatalysis mark. Positions 578-592 are enriched in low complexity; it reads AGAEAQQGAQGTQGA. Positions 578–617 are disordered; that stretch reads AGAEAQQGAQGTQGADMGGNAQGKDDDNVVDADFKVEDDK. Basic and acidic residues predominate over residues 600-617; the sequence is GKDDDNVVDADFKVEDDK.

This sequence belongs to the heat shock protein 70 family.

Acts as a chaperone. The protein is Chaperone protein DnaK of Clostridium novyi (strain NT).